The sequence spans 71 residues: UPF0434 protein Csal_1588 (71 aa).

The protein belongs to the UPF0434 family.

This Chromohalobacter salexigens (strain ATCC BAA-138 / DSM 3043 / CIP 106854 / NCIMB 13768 / 1H11) protein is UPF0434 protein Csal_1588.